Here is a 350-residue protein sequence, read N- to C-terminus: Fe-S cluster assembly protein dre2 (350 aa).

The tract at residues 23–156 (TSFNLRTLLL…KPDHSASVAV (134 aa)) is N-terminal SAM-like domain. The interval 157-242 (PLRLRRKDNS…EDTLLTEEDM (86 aa)) is linker. Residues 165 to 209 (NSKTTAVSNAGPPVSTVEVPVSGKRKSVDMTEDVPEKDVPKNDVP) are disordered. Positions 190–208 (KSVDMTEDVPEKDVPKNDV) are enriched in basic and acidic residues. Residues cysteine 252, cysteine 263, cysteine 266, and cysteine 268 each contribute to the [2Fe-2S] cluster site. The interval 252 to 268 (CAPRAGKRRRACKDCTC) is fe-S binding site A. Residues cysteine 313, cysteine 316, cysteine 324, and cysteine 327 each coordinate [4Fe-4S] cluster. 2 consecutive short sequence motifs (cx2C motif) follow at residues 313–316 (CGNC) and 324–327 (CDGC). Positions 313 to 327 (CGNCSLGDAFRCDGC) are fe-S binding site B.

This sequence belongs to the anamorsin family. As to quaternary structure, monomer. Interacts with TAH18. Interacts with MIA40. Requires [2Fe-2S] cluster as cofactor. It depends on [4Fe-4S] cluster as a cofactor.

Its subcellular location is the cytoplasm. It is found in the mitochondrion intermembrane space. Functionally, component of the cytosolic iron-sulfur (Fe-S) protein assembly (CIA) machinery required for the maturation of extramitochondrial Fe-S proteins. Part of an electron transfer chain functioning in an early step of cytosolic Fe-S biogenesis, facilitating the de novo assembly of a [4Fe-4S] cluster on the scaffold complex CFD1-NBP35. Electrons are transferred to DRE2 from NADPH via the FAD- and FMN-containing protein TAH18. TAH18-DRE2 are also required for the assembly of the diferric tyrosyl radical cofactor of ribonucleotide reductase (RNR), probably by providing electrons for reduction during radical cofactor maturation in the catalytic small subunit RNR2. This is Fe-S cluster assembly protein dre2 from Sclerotinia sclerotiorum (strain ATCC 18683 / 1980 / Ss-1) (White mold).